The following is a 316-amino-acid chain: 4-hydroxy-3-methylbut-2-enyl diphosphate reductase (316 aa).

Residue Cys-12 coordinates [4Fe-4S] cluster. Positions 41 and 74 each coordinate (2E)-4-hydroxy-3-methylbut-2-enyl diphosphate. Dimethylallyl diphosphate-binding residues include His-41 and His-74. Isopentenyl diphosphate contacts are provided by His-41 and His-74. Cys-96 contributes to the [4Fe-4S] cluster binding site. Position 124 (His-124) interacts with (2E)-4-hydroxy-3-methylbut-2-enyl diphosphate. His-124 provides a ligand contact to dimethylallyl diphosphate. Isopentenyl diphosphate is bound at residue His-124. Glu-126 (proton donor) is an active-site residue. Thr-169 is a (2E)-4-hydroxy-3-methylbut-2-enyl diphosphate binding site. Cys-199 serves as a coordination point for [4Fe-4S] cluster. (2E)-4-hydroxy-3-methylbut-2-enyl diphosphate contacts are provided by Ser-227, Ser-228, Asn-229, and Ser-271. Dimethylallyl diphosphate is bound by residues Ser-227, Ser-228, Asn-229, and Ser-271. Isopentenyl diphosphate-binding residues include Ser-227, Ser-228, Asn-229, and Ser-271.

Belongs to the IspH family. [4Fe-4S] cluster serves as cofactor.

It catalyses the reaction isopentenyl diphosphate + 2 oxidized [2Fe-2S]-[ferredoxin] + H2O = (2E)-4-hydroxy-3-methylbut-2-enyl diphosphate + 2 reduced [2Fe-2S]-[ferredoxin] + 2 H(+). The enzyme catalyses dimethylallyl diphosphate + 2 oxidized [2Fe-2S]-[ferredoxin] + H2O = (2E)-4-hydroxy-3-methylbut-2-enyl diphosphate + 2 reduced [2Fe-2S]-[ferredoxin] + 2 H(+). Its pathway is isoprenoid biosynthesis; dimethylallyl diphosphate biosynthesis; dimethylallyl diphosphate from (2E)-4-hydroxy-3-methylbutenyl diphosphate: step 1/1. It functions in the pathway isoprenoid biosynthesis; isopentenyl diphosphate biosynthesis via DXP pathway; isopentenyl diphosphate from 1-deoxy-D-xylulose 5-phosphate: step 6/6. Catalyzes the conversion of 1-hydroxy-2-methyl-2-(E)-butenyl 4-diphosphate (HMBPP) into a mixture of isopentenyl diphosphate (IPP) and dimethylallyl diphosphate (DMAPP). Acts in the terminal step of the DOXP/MEP pathway for isoprenoid precursor biosynthesis. The sequence is that of 4-hydroxy-3-methylbut-2-enyl diphosphate reductase from Stenotrophomonas maltophilia (strain R551-3).